The chain runs to 509 residues: UDP-N-acetylmuramyl-tripeptide synthetase (509 aa).

124–130 provides a ligand contact to ATP; the sequence is GTNGKTS. UDP-N-acetyl-alpha-D-muramoyl-L-alanyl-D-glutamate is bound by residues 164 to 165, S191, and R199; that span reads TT. K231 bears the N6-carboxylysine mark.

The protein belongs to the MurCDEF family. MurE subfamily. Post-translationally, carboxylation is probably crucial for Mg(2+) binding and, consequently, for the gamma-phosphate positioning of ATP.

The protein resides in the cytoplasm. It functions in the pathway cell wall biogenesis; peptidoglycan biosynthesis. Its function is as follows. Catalyzes the addition of an amino acid to the nucleotide precursor UDP-N-acetylmuramoyl-L-alanyl-D-glutamate (UMAG) in the biosynthesis of bacterial cell-wall peptidoglycan. This chain is UDP-N-acetylmuramyl-tripeptide synthetase, found in Tropheryma whipplei (strain Twist) (Whipple's bacillus).